The primary structure comprises 1035 residues: Protein SEY1 homolog (1035 aa).

The GB1/RHD3-type G domain occupies 32–267 (DGTFICVSVF…TTLIPLTDSS (236 aa)). 42–49 (GPQSSGKS) is a GTP binding site.

This sequence belongs to the TRAFAC class dynamin-like GTPase superfamily. GB1/RHD3 GTPase family. RHD3 subfamily.

It is found in the endoplasmic reticulum membrane. Probable GTP-binding protein that may be involved in cell development. This Giardia intestinalis (strain ATCC 50803 / WB clone C6) (Giardia lamblia) protein is Protein SEY1 homolog.